The primary structure comprises 272 residues: uncharacterized protein (272 aa).

Glutamate 163 is an active-site residue.

The protein belongs to the glycosyl hydrolase 25 family.

This is an uncharacterized protein from Escherichia coli O157:H7.